The primary structure comprises 439 residues: tRNA modification GTPase MnmE (439 aa).

(6S)-5-formyl-5,6,7,8-tetrahydrofolate is bound by residues arginine 24, glutamate 81, and lysine 121. The TrmE-type G domain occupies glycine 218–glutamate 363. Asparagine 228 serves as a coordination point for K(+). GTP-binding positions include asparagine 228–serine 233, threonine 247–threonine 253, and aspartate 272–glycine 275. Serine 232 provides a ligand contact to Mg(2+). K(+)-binding residues include threonine 247, isoleucine 249, and threonine 252. Threonine 253 lines the Mg(2+) pocket. Residue lysine 439 coordinates (6S)-5-formyl-5,6,7,8-tetrahydrofolate.

Belongs to the TRAFAC class TrmE-Era-EngA-EngB-Septin-like GTPase superfamily. TrmE GTPase family. In terms of assembly, homodimer. Heterotetramer of two MnmE and two MnmG subunits. The cofactor is K(+).

Its subcellular location is the cytoplasm. Its function is as follows. Exhibits a very high intrinsic GTPase hydrolysis rate. Involved in the addition of a carboxymethylaminomethyl (cmnm) group at the wobble position (U34) of certain tRNAs, forming tRNA-cmnm(5)s(2)U34. This Rhizobium johnstonii (strain DSM 114642 / LMG 32736 / 3841) (Rhizobium leguminosarum bv. viciae) protein is tRNA modification GTPase MnmE.